Here is a 239-residue protein sequence, read N- to C-terminus: tRNA (guanine-N(7)-)-methyltransferase (239 aa).

S-adenosyl-L-methionine-binding residues include Glu69, Glu94, Asp121, and Asp144. Residue Asp144 is part of the active site. Lys148 contributes to the substrate binding site. Positions 150–155 (RHNKRR) are interaction with RNA. Substrate-binding positions include Asp180 and 217 to 220 (TKFE).

The protein belongs to the class I-like SAM-binding methyltransferase superfamily. TrmB family. In terms of assembly, monomer.

The enzyme catalyses guanosine(46) in tRNA + S-adenosyl-L-methionine = N(7)-methylguanosine(46) in tRNA + S-adenosyl-L-homocysteine. It functions in the pathway tRNA modification; N(7)-methylguanine-tRNA biosynthesis. Functionally, catalyzes the formation of N(7)-methylguanine at position 46 (m7G46) in tRNA. This is tRNA (guanine-N(7)-)-methyltransferase from Yersinia enterocolitica serotype O:8 / biotype 1B (strain NCTC 13174 / 8081).